Consider the following 97-residue polypeptide: Large ribosomal subunit protein eL21 (97 aa).

The interval 1-26 is disordered; that stretch reads MQKSEGFRSKTRYKLQKHPRQKGMAP. Residues 9 to 21 show a composition bias toward basic residues; that stretch reads SKTRYKLQKHPRQ.

It belongs to the eukaryotic ribosomal protein eL21 family.

The polypeptide is Large ribosomal subunit protein eL21 (Methanococcus maripaludis (strain C6 / ATCC BAA-1332)).